We begin with the raw amino-acid sequence, 1824 residues long: Treslin (1824 aa).

10 disordered regions span residues 542 to 572 (EFYQ…QKMK), 590 to 622 (AQKT…KPGL), 907 to 973 (SPSK…SGES), 1001 to 1035 (RHSS…KGKF), 1098 to 1117 (AVGC…VGDN), 1189 to 1221 (VPEN…SPEE), 1293 to 1388 (PFCN…DDDK), 1459 to 1518 (FEGK…QSSP), 1617 to 1650 (TPTH…NLNS), and 1803 to 1824 (PLCQ…KLLD). Positions 546–555 (SSTAGSSGSL) are enriched in low complexity. Over residues 562 to 572 (TQCTPVRQKMK) the composition is skewed to polar residues. The span at 605–619 (GTEKGGKKSSGDRTK) shows a compositional bias: basic and acidic residues. The segment covering 907–921 (SPSKKSKMPRSQSVS) has biased composition (polar residues). The segment covering 932 to 952 (SDVDNDDRHTLLTKKVSETPL) has biased composition (basic and acidic residues). Composition is skewed to polar residues over residues 1005-1014 (VFYSSSQPRS) and 1103-1114 (TPQSPRTPNRTV). Residues 1319-1345 (RSGNTPVKESCSPSSNSQGITGTSPSP) show a composition bias toward polar residues. Positions 1347–1370 (KSLSSAVAKSSPSPSFGPSRSGVG) are enriched in low complexity. Residues 1462-1472 (KQTTSTGTPLT) show a composition bias toward polar residues. Over residues 1480–1490 (TPDRRQREAEA) the composition is skewed to basic and acidic residues. Polar residues-rich tracts occupy residues 1617–1629 (TPTH…QSPL) and 1636–1650 (SPQS…NLNS). Over residues 1807-1824 (PRRRRTPSRTYSRKKLLD) the composition is skewed to basic residues.

Belongs to the treslin family. In terms of assembly, interacts with topbp1 (via BRCT domains); interaction takes place in a cdk2-dependent manner. Component of the replisome complex.

The protein localises to the nucleus. Its function is as follows. Regulator of DNA replication and S/M and G2/M checkpoints. Regulates the triggering of DNA replication initiation via its interaction with topbp1 by participating in cdk2-mediated loading of cdc45l onto replication origins. Required for the transition from pre-replication complex (pre-RC) to pre-initiation complex (pre-IC). Required to prevent mitotic entry after treatment with ionizing radiation. The sequence is that of Treslin (ticrr) from Danio rerio (Zebrafish).